Reading from the N-terminus, the 164-residue chain is Phospholipase A and acyltransferase 4 (164 aa).

The tract at residues 1–40 is essential for its ability regulate keratinocyte differentiation; that stretch reads MASPHQEPKPGDLIEIFRLGYEHWALYIGDGYVIHLAPPS. Topologically, residues 1-134 are cytoplasmic; sequence MASPHQEPKP…SRCKQVEKAK (134 aa). The LRAT domain maps to 13–129; that stretch reads LIEIFRLGYE…LRYGKSRCKQ (117 aa). Catalysis depends on residues histidine 23 and histidine 35. Cysteine 113 acts as the Acyl-thioester intermediate in catalysis. Residues 124 to 164 are interaction with TGM1; sequence KSRCKQVEKAKVEVGVATALGILVVAGCSFAIRRYQKKATA. The helical transmembrane segment at 135-155 threads the bilayer; it reads VEVGVATALGILVVAGCSFAI. Residues 156–164 are Lumenal-facing; it reads RRYQKKATA.

This sequence belongs to the H-rev107 family. As to quaternary structure, interacts with TGM1. Widely expressed.

It localises to the membrane. The enzyme catalyses a 1,2-diacyl-sn-glycero-3-phosphocholine + H2O = a 1-acyl-sn-glycero-3-phosphocholine + a fatty acid + H(+). The catalysed reaction is a 1,2-diacyl-sn-glycero-3-phosphocholine + H2O = a 2-acyl-sn-glycero-3-phosphocholine + a fatty acid + H(+). It carries out the reaction 1,2-dihexadecanoyl-sn-glycero-3-phosphocholine + H2O = 1-hexadecanoyl-sn-glycero-3-phosphocholine + hexadecanoate + H(+). It catalyses the reaction 1,2-dihexadecanoyl-sn-glycero-3-phosphocholine + H2O = 2-hexadecanoyl-sn-glycero-3-phosphocholine + hexadecanoate + H(+). The enzyme catalyses 1-hexadecanoyl-2-(9Z-octadecenoyl)-sn-glycero-3-phosphocholine + H2O = 2-(9Z-octadecenoyl)-sn-glycero-3-phosphocholine + hexadecanoate + H(+). The catalysed reaction is 1-hexadecanoyl-2-(9Z-octadecenoyl)-sn-glycero-3-phosphocholine + H2O = 1-hexadecanoyl-sn-glycero-3-phosphocholine + (9Z)-octadecenoate + H(+). It carries out the reaction 1-hexadecanoyl-2-(5Z,8Z,11Z,14Z-eicosatetraenoyl)-sn-glycero-3-phosphocholine + H2O = 2-(5Z,8Z,11Z,14Z)-eicosatetraenoyl-sn-glycero-3-phosphocholine + hexadecanoate + H(+). It catalyses the reaction 1-hexadecanoyl-2-(9Z,12Z-octadecadienoyl)-sn-glycero-3-phosphoethanolamine + H2O = 1-hexadecanoyl-sn-glycero-3-phosphoethanolamine + (9Z,12Z)-octadecadienoate + H(+). The enzyme catalyses 1-hexadecanoyl-2-(9Z,12Z-octadecadienoyl)-sn-glycero-3-phosphoethanolamine + H2O = 2-(9Z,12Z)-octadecadienoyl-sn-glycero-3-phosphoethanolamine + hexadecanoate + H(+). The catalysed reaction is 1-hexadecanoyl-2-(5Z,8Z,11Z,14Z-eicosatetraenoyl)-sn-glycero-3-phosphoethanolamine + H2O = 2-(5Z,8Z,11Z,14Z)-eicosatetraenoyl-sn-glycero-3-phosphoethanolamine + hexadecanoate + H(+). It carries out the reaction 1-hexanoyl-2-acyl-sn-glycero-3-phosphocholine + H2O = hexanoate + a 2-acyl-sn-glycero-3-phosphocholine + H(+). It catalyses the reaction 1,2-diheptadecanoyl-sn-glycero-3-phosphoethanolamine + 1-(9Z-octadecenoyl)-2-hexadecanoyl-sn-glycero-3-phosphocholine = 1,2-diheptadecanoyl-sn-glycero-3-phospho-N-hexadecanoyl-ethanolamine + 1-(9Z-octadecenoyl)-sn-glycero-3-phosphocholine + H(+). The enzyme catalyses 1,2-diheptadecanoyl-sn-glycero-3-phosphoethanolamine + 1-(9Z-octadecenoyl)-2-hexadecanoyl-sn-glycero-3-phosphocholine = 1,2-diheptadecanoyl-sn-glycero-3-phospho-N-(9Z-octadecenoyl)-ethanolamine + 2-hexadecanoyl-sn-glycero-3-phosphocholine + H(+). Exhibits both phospholipase A1/2 and acyltransferase activities. Shows phospholipase A1 (PLA1) and A2 (PLA2), catalyzing the calcium-independent release of fatty acids from the sn-1 or sn-2 position of glycerophospholipids. For most substrates, PLA1 activity is much higher than PLA2 activity. Shows O-acyltransferase activity, catalyzing the transfer of a fatty acyl group from glycerophospholipid to the hydroxyl group of lysophospholipid. Shows N-acyltransferase activity, catalyzing the calcium-independent transfer of a fatty acyl group at the sn-1 position of phosphatidylcholine (PC) and other glycerophospholipids to the primary amine of phosphatidylethanolamine (PE), forming N-acylphosphatidylethanolamine (NAPE), which serves as precursor for N-acylethanolamines (NAEs). Promotes keratinocyte differentiation via activation of TGM1. In Homo sapiens (Human), this protein is Phospholipase A and acyltransferase 4.